A 316-amino-acid chain; its full sequence is Pantothenate kinase (316 aa).

95 to 102 (GSVAVGKS) serves as a coordination point for ATP.

The protein belongs to the prokaryotic pantothenate kinase family.

It is found in the cytoplasm. The catalysed reaction is (R)-pantothenate + ATP = (R)-4'-phosphopantothenate + ADP + H(+). Its pathway is cofactor biosynthesis; coenzyme A biosynthesis; CoA from (R)-pantothenate: step 1/5. The chain is Pantothenate kinase from Photorhabdus laumondii subsp. laumondii (strain DSM 15139 / CIP 105565 / TT01) (Photorhabdus luminescens subsp. laumondii).